A 178-amino-acid chain; its full sequence is Zinc finger protein ZAT11 (178 aa).

C2H2-type zinc fingers lie at residues Phe-47–His-69 and His-94–His-116.

Expressed in leaves.

The protein localises to the nucleus. In terms of biological role, probable transcription factor that may be involved in stress responses. This is Zinc finger protein ZAT11 (ZAT11) from Arabidopsis thaliana (Mouse-ear cress).